Consider the following 891-residue polypeptide: Kinesin-like protein KIN-UB (891 aa).

A disordered region spans residues 1-54 (MSGKVANATPKAAAGKPRLSAAGGGAYRRTSSGPLPSAGGGGGRASSESGVSSR). The span at 45–54 (ASSESGVSSR) shows a compositional bias: low complexity. Residues 54–400 (RVRVAVRLRP…IMFGQRAMKV (347 aa)) form the Kinesin motor domain. 139–146 (GQTGTGKT) contributes to the ATP binding site. The short motif at 370–378 (RTSLVVTIG) is the D-BOX element. The stretch at 502–592 (TSSEVGEVQN…ADETRRSLDR (91 aa)) forms a coiled coil. Positions 586–595 (TRRSLDRGDG) are enriched in basic and acidic residues. Positions 586–626 (TRRSLDRGDGSGKIFPGFDSLMSHSRNSQPREQSNGPKPPI) are disordered. Positions 607-621 (MSHSRNSQPREQSNG) are enriched in polar residues. 4 ARM repeats span residues 623–662 (KPPIAKLFEQVGLQKILSLLESEEPDVRVHAVKVVANLAA), 664–704 (EANQ…NLAM), 706–746 (ETNQ…NLCG), and 748–787 (DKLQTRLRGEGGIKALLGMVKCGHPDVLAQVARGIANFAK).

This sequence belongs to the TRAFAC class myosin-kinesin ATPase superfamily. Kinesin family. Ungrouped subfamily.

The protein resides in the cytoplasm. It is found in the cytoskeleton. This Oryza sativa subsp. japonica (Rice) protein is Kinesin-like protein KIN-UB.